Reading from the N-terminus, the 100-residue chain is Apolipoprotein C-II (100 aa).

Positions 1–22 (MGTRFLLALFLVLLVLGFEVQG) are cleaved as a signal peptide. Residues 66 to 74 (TVDEKLRDM) are lipid binding. The segment at 78–100 (STAAVSTYAGIFTDQLLTLLKGD) is lipoprotein lipase cofactor.

This sequence belongs to the apolipoprotein C2 family. In terms of processing, proapolipoprotein C-II is synthesized as a sialic acid containing glycoprotein which is subsequently desialylated prior to its proteolytic processing. Post-translationally, proapolipoprotein C-II, the major form found in plasma undergoes proteolytic cleavage of its N-terminal hexapeptide to generate apolipoprotein C-II, which occurs as the minor form in plasma.

It localises to the secreted. In terms of biological role, component of chylomicrons, very low-density lipoproteins (VLDL), low-density lipoproteins (LDL), and high-density lipoproteins (HDL) in plasma. Plays an important role in lipoprotein metabolism as an activator of lipoprotein lipase. Both proapolipoprotein C-II and apolipoprotein C-II can activate lipoprotein lipase. In Otolemur garnettii (Small-eared galago), this protein is Apolipoprotein C-II (APOC2).